A 142-amino-acid chain; its full sequence is Putative tyrosine phosphatase 123R (142 aa).

Positions 2–137 (EPTKIVENLY…LAQFERWLNS (136 aa)) constitute a Tyrosine-protein phosphatase domain. Cysteine 81 functions as the Phosphocysteine intermediate in the catalytic mechanism.

The protein belongs to the protein-tyrosine phosphatase family.

The polypeptide is Putative tyrosine phosphatase 123R (Invertebrate iridescent virus 6 (IIV-6)).